The primary structure comprises 433 residues: 23S rRNA (uracil(1939)-C(5))-methyltransferase RlmD (433 aa).

The region spanning 10 to 68 is the TRAM domain; it reads RTTTRQIITVSVNDLDSFGQGVARHNGKTLFIPGLLSQENAEVTVTEDKKQYARAKVVR. 4 residues coordinate [4Fe-4S] cluster: Cys81, Cys87, Cys90, and Cys162. S-adenosyl-L-methionine-binding residues include Gln265, Phe294, Asn299, Glu315, Asn342, and Asp363. The active-site Nucleophile is the Cys389.

Belongs to the class I-like SAM-binding methyltransferase superfamily. RNA M5U methyltransferase family. RlmD subfamily.

The catalysed reaction is uridine(1939) in 23S rRNA + S-adenosyl-L-methionine = 5-methyluridine(1939) in 23S rRNA + S-adenosyl-L-homocysteine + H(+). Functionally, catalyzes the formation of 5-methyl-uridine at position 1939 (m5U1939) in 23S rRNA. This is 23S rRNA (uracil(1939)-C(5))-methyltransferase RlmD from Shigella dysenteriae serotype 1 (strain Sd197).